A 640-amino-acid chain; its full sequence is PAN2-PAN3 deadenylation complex subunit PAN3 (640 aa).

The C3H1-type zinc-finger motif lies at 17–46 (ENKDILCRNVLIYGHCRYEDQGCTYNHDQN). 2 stretches are compositionally biased toward polar residues: residues 43–53 (HDQNKNSSQPE) and 63–87 (DSPS…SQAA). The interval 43–101 (HDQNKNSSQPEAPSKKMFNVDSPSFTPSGQSTVLPKKTTLSSQAASAAPFTPRGGGTPT) is disordered. The segment at 237–498 (QVIPNSGLPQ…TIEHFMTGIA (262 aa)) is pseudokinase domain. ATP is bound by residues Asn263, Arg288, 338–345 (DFHPLSKT), and 397–398 (SK). Residues 499–537 (SQMTTFFDLALQDNDEKLFHLAREVENGRIARSLMKLLT) are a coiled coil. The knob domain stretch occupies residues 538–640 (ILERGDYDGV…SKTGAPGANT (103 aa)).

This sequence belongs to the protein kinase superfamily. PAN3 family. As to quaternary structure, homodimer. Forms a heterotrimer with a catalytic subunit PAN2 to form the poly(A)-nuclease (PAN) deadenylation complex. Interacts (via PAM-2 motif) with poly(A)-binding protein PAB1 (via PABC domain), conferring substrate specificity of the enzyme complex.

The protein resides in the cytoplasm. Functionally, regulatory subunit of the poly(A)-nuclease (PAN) deadenylation complex, one of two cytoplasmic mRNA deadenylases involved in mRNA turnover. PAN specifically shortens poly(A) tails of RNA and the activity is stimulated by poly(A)-binding protein PAB1. PAN deadenylation is followed by rapid degradation of the shortened mRNA tails by the CCR4-NOT complex. Deadenylated mRNAs are then degraded by two alternative mechanisms, namely exosome-mediated 3'-5' exonucleolytic degradation, or deadenylation-dependent mRNA decaping and subsequent 5'-3' exonucleolytic degradation by XRN1. May also be involved in post-transcriptional maturation of mRNA poly(A) tails. PAN3 acts as a positive regulator for PAN activity, recruiting the catalytic subunit PAN2 to mRNA via its interaction with RNA and with PAB1. This is PAN2-PAN3 deadenylation complex subunit PAN3 from Chaetomium thermophilum (strain DSM 1495 / CBS 144.50 / IMI 039719) (Thermochaetoides thermophila).